The following is a 67-amino-acid chain: uncharacterized protein (67 aa).

This is an uncharacterized protein from Saccharolobus islandicus (Sulfolobus islandicus).